We begin with the raw amino-acid sequence, 80 residues long: Exodeoxyribonuclease 7 small subunit (80 aa).

This sequence belongs to the XseB family. Heterooligomer composed of large and small subunits.

The protein localises to the cytoplasm. It catalyses the reaction Exonucleolytic cleavage in either 5'- to 3'- or 3'- to 5'-direction to yield nucleoside 5'-phosphates.. In terms of biological role, bidirectionally degrades single-stranded DNA into large acid-insoluble oligonucleotides, which are then degraded further into small acid-soluble oligonucleotides. The protein is Exodeoxyribonuclease 7 small subunit of Pseudomonas putida (strain ATCC 700007 / DSM 6899 / JCM 31910 / BCRC 17059 / LMG 24140 / F1).